The following is a 227-amino-acid chain: E3 ubiquitin-protein ligase RNF186 (227 aa).

The RING-type zinc-finger motif lies at 40-86; it reads CLVCREPYSCPRLPKLLACQHAFCAICLKLLLCVQDNTWSITCPLCR. Transmembrane regions (helical) follow at residues 158–178 and 180–200; these read HLLL…PGVL and WVLT…CCLP.

Interacts with BNIP1. Post-translationally, polyubiquitinated. 'Lys-29'-linked autoubiquitination leads to proteasomal degradation.

The protein localises to the endoplasmic reticulum membrane. It carries out the reaction S-ubiquitinyl-[E2 ubiquitin-conjugating enzyme]-L-cysteine + [acceptor protein]-L-lysine = [E2 ubiquitin-conjugating enzyme]-L-cysteine + N(6)-ubiquitinyl-[acceptor protein]-L-lysine.. Its pathway is protein modification; protein ubiquitination. In terms of biological role, E3 ubiquitin protein ligase that is part of an apoptotic signaling pathway activated by endoplasmic reticulum stress. Stimulates the expression of proteins specific of the unfolded protein response (UPR), ubiquitinates BNIP1 and regulates its localization to the mitochondrion and induces calcium release from the endoplasmic reticulum that ultimately leads to cell apoptosis. Plays a role in the maintenance of intestinal homeostasis and clearance of enteric pathogens. Upon NOD2 stimulation, ubiquitinates the ER stress sensor activating transcription factor 6/ATF6 and promotes the unfolded protein response UPR. Participates in basal level of autophagy maintenance by regulating the ubiquitination of EPHB2 and EPHB3. Upon stimulation by ligand EFNB1, ubiquitinates EPHB2 and further recruits MAP1LC3B for autophagy induction. Controls nutrient sensing by ubiquitinating Sestrin-2/SESN2, which is an intracellular sensor of cytosolic leucine and inhibitor of mTORC1 activity. This is E3 ubiquitin-protein ligase RNF186 from Homo sapiens (Human).